The chain runs to 92 residues: Trp operon repressor homolog (92 aa).

Residues 56–79 mediate DNA binding; that stretch reads QREVASKLGVSITKITRGAANLQD.

This sequence belongs to the TrpR family. As to quaternary structure, homodimer.

The protein localises to the cytoplasm. Its function is as follows. This protein is an aporepressor. When complexed with L-tryptophan it binds the operator region of the trp operon and prevents the initiation of transcription. This chain is Trp operon repressor homolog, found in Xylella fastidiosa (strain M23).